The sequence spans 224 residues: Probable Brix domain-containing ribosomal biogenesis protein (224 aa).

Residues 1 to 196 (MMLITTSHRP…IWIMEDGRRW (196 aa)) form the Brix domain.

Probably involved in the biogenesis of the ribosome. The chain is Probable Brix domain-containing ribosomal biogenesis protein from Pyrococcus horikoshii (strain ATCC 700860 / DSM 12428 / JCM 9974 / NBRC 100139 / OT-3).